The primary structure comprises 285 residues: Short chain dehydrogenase sol3 (285 aa).

NADP(+)-binding residues include Leu-39, Lys-64, and Asp-87. Catalysis depends on proton donor residues Ser-168 and Tyr-200. Positions 200, 204, and 234 each coordinate NADP(+). Residue Lys-204 is the Lowers pKa of active site Tyr of the active site.

It belongs to the short-chain dehydrogenases/reductases (SDR) family.

Its pathway is phytotoxin biosynthesis. Its function is as follows. Short chain dehydrogenase; part of the gene cluster that mediates the biosynthesis of the phytotoxin solanapyrone, a causal agent of early blight disease of potato and tomato. The prosolanapyrone synthase sol1 is a polyketide synthase that produces the octaketide desmethylprosolanapyrone I via sequential condensations of 7 malonyl-CoA units with one acetyl-CoA unit, and one methylation step. The octaketide backbone is further methylated by the sol2 O-methyltransferase to yield prosolanapyrone I. Prosolanapyrone I is hydroxylated to prosolanapyrone II by the cytochrome P450 monooxygenase sol6. The solanapyrone synthase sol5 then catalyzes the oxidation of prosolanapyrone II and the subsequent Diels Alder cycloisomerization of the product prosolanapyrone III to solanapyrones A and D. Solanapyrones A and D are then converted into solanapyrones B and E, respectively, by the sol3 dehydrogenase. In Alternaria solani, this protein is Short chain dehydrogenase sol3 (sol3).